Reading from the N-terminus, the 439-residue chain is Lipase 1 (439 aa).

An N-terminal signal peptide occupies residues 1 to 24 (MRCSLRMQLLLLLGLCVFISRIQG). Positions 28 to 60 (GGEEDEEDEEEEEEEEESVEDETPEDRLQRKNI) are disordered. Residues 29-51 (GEEDEEDEEEEEEEEESVEDETP) are compositionally biased toward acidic residues. N-linked (GlcNAc...) asparagine glycosylation is found at asparagine 124 and asparagine 151. The Charge relay system role is filled by serine 197. Residues asparagine 346 and asparagine 379 are each glycosylated (N-linked (GlcNAc...) asparagine). The Charge relay system role is filled by histidine 393. A glycan (N-linked (GlcNAc...) asparagine) is linked at asparagine 426.

It belongs to the AB hydrolase superfamily. Lipase family. In terms of tissue distribution, in 14 hours embryos expression is seen in the foregut/midgut boundary.

It is found in the secreted. Could be a digestive enzyme. This Drosophila melanogaster (Fruit fly) protein is Lipase 1 (Lip1).